The primary structure comprises 1121 residues: Anillin (1121 aa).

Position 1 is an N-acetylmethionine (Met1). Over residues 1-25 the composition is skewed to basic and acidic residues; it reads MDPFTEKLLERTRARRENLQRKMAE. Positions 1 to 45 are required for ubiquitination; that stretch reads MDPFTEKLLERTRARRENLQRKMAERPTAVARSAPHAKRGREPLS. 3 disordered regions span residues 1 to 113, 125 to 196, and 212 to 402; these read MDPF…AAIS, ADRG…PVGR, and DDVS…TKAI. The interaction with CD2AP stretch occupies residues 1 to 154; that stretch reads MDPFTEKLLE…MQRLAEQRRH (154 aa). Residues 1–228 are nuclear localization; the sequence is MDPFTEKLLE…AKQNSVQEQP (228 aa). Ser73 and Ser96 each carry phosphoserine. Residues 96-109 are compositionally biased toward pro residues; that stretch reads SPMPAPRQAKPPAP. The span at 130–143 shows a compositional bias: polar residues; that stretch reads NSGSEASATSSVKT. Basic and acidic residues predominate over residues 147-157; that stretch reads RLAEQRRHWDS. Ser180 is modified (phosphoserine). A Phosphothreonine modification is found at Thr192. Residues 216 to 228 are compositionally biased toward polar residues; sequence HSSAKQNSVQEQP. A phosphoserine mark is found at Ser223, Ser250, and Ser259. The interaction with F-actin stretch occupies residues 229-671; it reads GTACLSKSSS…RDLLYSIDAY (443 aa). Low complexity predominate over residues 234–250; it reads SKSSSASGASASINSSS. Over residues 282 to 298 the composition is skewed to low complexity; sequence SASVSSSVKASSPVTAA. Residues 303–314 show a composition bias toward basic and acidic residues; that stretch reads ENREAQNPELLH. Thr316 carries the phosphothreonine modification. Ser318 and Ser334 each carry phosphoserine. Thr359 carries the phosphothreonine modification. Lys366 bears the N6-acetyllysine mark. Basic and acidic residues predominate over residues 368 to 384; that stretch reads FLERFGERCQEHSKESP. A compositionally biased stretch (polar residues) spans 391-401; it reads KTPNITPNTKA. Phosphothreonine occurs at positions 392 and 396. Phosphoserine is present on residues Ser414 and Ser444. The interval 490–511 is disordered; it reads NEPAVKLSSTEPAGSTESEMTK. The segment covering 496 to 511 has biased composition (polar residues); sequence LSSTEPAGSTESEMTK. Residues Ser513, Ser548, and Ser556 each carry the phosphoserine modification. Positions 564–599 form a coiled coil; the sequence is FSDVLEEGELDVEKSQEEMDQVGAENSEEQEDALNI. Residues 623-635 are compositionally biased toward polar residues; sequence SPPSELRDSNLSA. The interval 623-656 is disordered; that stretch reads SPPSELRDSNLSAASPKPGKFQRTRVPRAESADS. Phosphoserine is present on residues Ser637, Ser653, Ser656, and Ser659. Tyr666 bears the Phosphotyrosine mark. Ser673, Ser683, Ser787, and Ser924 each carry phosphoserine. A localization to the cleavage furrow region spans residues 725–1121; that stretch reads QQTVIYQASQ…DACYKPVGKP (397 aa). The region spanning 980–1104 is the PH domain; it reads AVEEKGFLTI…WMQKLNQVIV (125 aa).

In terms of assembly, interacts with F-actin. Interacts with CD2AP. May interact with RHOA. Interacts with FZR1/CDH1 during mitotic exit. Post-translationally, phosphorylated during mitosis. Ubiquitinated, and this requires FZR1/CDH1.

Its subcellular location is the nucleus. It is found in the cytoplasm. It localises to the cytoskeleton. The protein localises to the cell cortex. The protein resides in the cell projection. Its subcellular location is the bleb. Functionally, required for cytokinesis. Essential for the structural integrity of the cleavage furrow and for completion of cleavage furrow ingression. Plays a role in bleb assembly during metaphase and anaphase of mitosis. May play a significant role in podocyte cell migration. The chain is Anillin (Anln) from Mus musculus (Mouse).